The sequence spans 1397 residues: Clustered mitochondria protein homolog (1397 aa).

The TPR 1 repeat unit spans residues 30 to 63; sequence LPSFIDQKGDLKIPSHYEETITDLKLTLTVIPKT. Disordered stretches follow at residues 158–203 and 526–555; these read TARG…LSRE and DAAP…DEEE. The segment covering 161–203 has biased composition (basic and acidic residues); the sequence is GEAEKSDTNEEEQEQGKGKVGKPNEKESGETKETDSQPELSRE. The Clu domain maps to 368 to 640; it reads DSSRSQLMLI…RTTPRDIEFI (273 aa). Residues 559–595 form a TPR 2 repeat; the sequence is EKVLYGLSSDSQKILEDKSFEKPLKLLSEVFHLKPHG. Composition is skewed to basic and acidic residues over residues 686 to 703, 812 to 831, 839 to 860, and 1019 to 1033; these read EGKL…EEKS, EKVE…KERA, SDDK…NTES, and QREQ…NVEK. Disordered stretches follow at residues 686 to 707, 812 to 869, and 1019 to 1050; these read EGKL…QIAL, EKVE…EEQP, and QREQ…PIEN. Positions 1034–1043 are enriched in basic residues; it reads KHSKKSKKKS. TPR repeat units follow at residues 1167–1200 and 1209–1242; these read IAAY…WTST and VNLL…CSHL. Polar residues-rich tracts occupy residues 1314–1338 and 1362–1373; these read AQSK…SQAS and PQSDPQIANQSV. A disordered region spans residues 1314–1397; it reads AQSKKSPPPT…AKSKSKHTKA (84 aa). Basic and acidic residues predominate over residues 1375–1384; that stretch reads DILKFIEGKS. Over residues 1386 to 1397 the composition is skewed to basic residues; the sequence is PNAKSKSKHTKA.

It belongs to the CLU family. In terms of assembly, may associate with the eukaryotic translation initiation factor 3 (eIF-3) complex.

The protein localises to the cytoplasm. MRNA-binding protein involved in proper cytoplasmic distribution of mitochondria. The chain is Clustered mitochondria protein homolog from Lodderomyces elongisporus (strain ATCC 11503 / CBS 2605 / JCM 1781 / NBRC 1676 / NRRL YB-4239) (Yeast).